Here is a 508-residue protein sequence, read N- to C-terminus: Serine/threonine protein kinase OSK3 (508 aa).

Residues 17-269 (YNLGRTLGIG…IREIREHQWF (253 aa)) form the Protein kinase domain. Residues 23–31 (LGIGSFGKV) and Lys-46 contribute to the ATP site. The Proton acceptor role is filled by Asp-140. One can recognise a UBA domain in the interval 290–330 (MIDEDTLQDVVNLGYGKDHVCESLRNRLQNEATVAYYLLLD). Residues 459–507 (NGRLPAVIKFEIQLYKTRDEKYLLDMQRVTGPQLLFLDFCADFLTKLRV) enclose the KA1 domain.

The protein belongs to the protein kinase superfamily. Ser/Thr protein kinase family. In terms of assembly, interacts with HDR1. In terms of tissue distribution, strongly expressed in immature seeds. Mostly expressed in panicles, and to a lower extent, in leaf sheaths.

Its subcellular location is the nucleus. It carries out the reaction L-seryl-[protein] + ATP = O-phospho-L-seryl-[protein] + ADP + H(+). The enzyme catalyses L-threonyl-[protein] + ATP = O-phospho-L-threonyl-[protein] + ADP + H(+). The sequence is that of Serine/threonine protein kinase OSK3 from Oryza sativa subsp. indica (Rice).